We begin with the raw amino-acid sequence, 313 residues long: Probable 5-dehydro-4-deoxyglucarate dehydratase (313 aa).

The protein belongs to the DapA family.

It carries out the reaction 5-dehydro-4-deoxy-D-glucarate + H(+) = 2,5-dioxopentanoate + CO2 + H2O. It functions in the pathway carbohydrate acid metabolism; D-glucarate degradation; 2,5-dioxopentanoate from D-glucarate: step 2/2. This Bradyrhizobium sp. (strain BTAi1 / ATCC BAA-1182) protein is Probable 5-dehydro-4-deoxyglucarate dehydratase.